The primary structure comprises 198 residues: dITP/XTP pyrophosphatase (198 aa).

Residue 11 to 16 (THNPGK) participates in substrate binding. Positions 44 and 73 each coordinate Mg(2+). Asp-73 functions as the Proton acceptor in the catalytic mechanism. Residues Ser-74, 156-159 (FGYD), Lys-179, and 184-185 (HR) each bind substrate.

Belongs to the HAM1 NTPase family. In terms of assembly, homodimer. It depends on Mg(2+) as a cofactor.

The enzyme catalyses XTP + H2O = XMP + diphosphate + H(+). The catalysed reaction is dITP + H2O = dIMP + diphosphate + H(+). It catalyses the reaction ITP + H2O = IMP + diphosphate + H(+). Its function is as follows. Pyrophosphatase that catalyzes the hydrolysis of nucleoside triphosphates to their monophosphate derivatives, with a high preference for the non-canonical purine nucleotides XTP (xanthosine triphosphate), dITP (deoxyinosine triphosphate) and ITP. Seems to function as a house-cleaning enzyme that removes non-canonical purine nucleotides from the nucleotide pool, thus preventing their incorporation into DNA/RNA and avoiding chromosomal lesions. This Bacillus subtilis (strain 168) protein is dITP/XTP pyrophosphatase (ysnA).